Reading from the N-terminus, the 476-residue chain is Eukaryotic translation initiation factor 3 subunit L (476 aa).

A PCI domain is found at 257 to 452 (DAIRMFSHIL…DLDYALENDL (196 aa)).

The protein belongs to the eIF-3 subunit L family. As to quaternary structure, component of the eukaryotic translation initiation factor 3 (eIF-3) complex.

The protein resides in the cytoplasm. Functionally, component of the eukaryotic translation initiation factor 3 (eIF-3) complex, which is involved in protein synthesis of a specialized repertoire of mRNAs and, together with other initiation factors, stimulates binding of mRNA and methionyl-tRNAi to the 40S ribosome. The eIF-3 complex specifically targets and initiates translation of a subset of mRNAs involved in cell proliferation. The polypeptide is Eukaryotic translation initiation factor 3 subunit L (Neosartorya fischeri (strain ATCC 1020 / DSM 3700 / CBS 544.65 / FGSC A1164 / JCM 1740 / NRRL 181 / WB 181) (Aspergillus fischerianus)).